Here is a 352-residue protein sequence, read N- to C-terminus: tRNA-specific 2-thiouridylase MnmA (352 aa).

Residues 6-13 (AMSGGVDS) and Leu-32 contribute to the ATP site. The Nucleophile role is filled by Cys-101. Cysteines 101 and 194 form a disulfide. Gly-125 is a binding site for ATP. Residues 144-146 (KDQ) form an interaction with tRNA region. Cys-194 serves as the catalytic Cysteine persulfide intermediate.

This sequence belongs to the MnmA/TRMU family.

The protein resides in the cytoplasm. The enzyme catalyses S-sulfanyl-L-cysteinyl-[protein] + uridine(34) in tRNA + AH2 + ATP = 2-thiouridine(34) in tRNA + L-cysteinyl-[protein] + A + AMP + diphosphate + H(+). Functionally, catalyzes the 2-thiolation of uridine at the wobble position (U34) of tRNA, leading to the formation of s(2)U34. This Frankia casuarinae (strain DSM 45818 / CECT 9043 / HFP020203 / CcI3) protein is tRNA-specific 2-thiouridylase MnmA.